A 96-amino-acid polypeptide reads, in one-letter code: Small ribosomal subunit protein bS6 (96 aa).

The protein belongs to the bacterial ribosomal protein bS6 family.

In terms of biological role, binds together with bS18 to 16S ribosomal RNA. This Streptococcus sanguinis (strain SK36) protein is Small ribosomal subunit protein bS6.